The sequence spans 459 residues: FAD-dependent monooxygenase CTB5 (459 aa).

The FAD-binding PCMH-type domain occupies 10–187 (SDLHPSCIAL…TAVTLKAFEQ (178 aa)).

The protein belongs to the oxygen-dependent FAD-linked oxidoreductase family.

It participates in mycotoxin biosynthesis. FAD-dependent monooxygenase; part of the gene cluster that mediates the biosynthesis of cercosporin, a light-activated, non-host-selective toxin. The perylenequinone chromophore of cercosporin absorbs light energy to attain an electronically-activated triplet state and produces active oxygen species such as the hydroxyl radical, superoxide, hydrogen peroxide or singlet oxygen upon reaction with oxygen molecules. These reactive oxygen species cause damage to various cellular components including lipids, proteins and nucleic acids. The first step of cercosporin biosynthesis is performed by the polyketide synthase CTB1 which catalyzes the formation of nor-toralactone. The starter unit acyltransferase (SAT) domain of CTB1 initiates polyketide extension by the selective utilization of acetyl-CoA, which is elongated to the heptaketide in the beta-ketoacyl synthase (KS) domain by successive condensations with six malonyl units introduced by the malonyl acyltransferase (MAT) domain. The product template (PT) domain catalyzes C4-C9 and C2-C11 aldol cyclizations and dehydrations to a trihydroxynaphthalene, which is thought to be delivered to the thioesterase (TE) domain for product release. The bifunctional enzyme CTB3 then methylates nor-toralactone to toralactone before conducting an unusual oxidative aromatic ring opening. The O-methyltransferase CTB2 further methylates the nascent OH-6 of the CBT3 product, blocking further oxidation at this site before the reductase CTB6 reduces the 2-oxopropyl ketone at position C7, giving naphthalene. The FAD-dependent monooxygenase CTB5 in concert with the multicopper oxidase CTB12 are responsible for homodimerization of naphthalene with CTB7 installing the dioxepine moiety, finally producing cercosporin. The fasciclin domain-containing protein CTB11 might act with CTB5 and CTB12 whereas the roles of CTB9 and CTB10 have still to be elucidated. The sequence is that of FAD-dependent monooxygenase CTB5 from Cercospora nicotianae (Barn spot disease fungus).